Reading from the N-terminus, the 295-residue chain is Ribosomal RNA small subunit methyltransferase A (295 aa).

S-adenosyl-L-methionine contacts are provided by asparagine 25, leucine 27, glycine 52, glutamate 73, aspartate 98, and asparagine 120.

This sequence belongs to the class I-like SAM-binding methyltransferase superfamily. rRNA adenine N(6)-methyltransferase family. RsmA subfamily.

It localises to the cytoplasm. The catalysed reaction is adenosine(1518)/adenosine(1519) in 16S rRNA + 4 S-adenosyl-L-methionine = N(6)-dimethyladenosine(1518)/N(6)-dimethyladenosine(1519) in 16S rRNA + 4 S-adenosyl-L-homocysteine + 4 H(+). Its function is as follows. Specifically dimethylates two adjacent adenosines (A1518 and A1519) in the loop of a conserved hairpin near the 3'-end of 16S rRNA in the 30S particle. May play a critical role in biogenesis of 30S subunits. The polypeptide is Ribosomal RNA small subunit methyltransferase A (Desulfotalea psychrophila (strain LSv54 / DSM 12343)).